We begin with the raw amino-acid sequence, 482 residues long: Retinoic acid receptor beta (482 aa).

The modulating stretch occupies residues 1–114; sequence MSTSSHACPV…PLPPPRVYKP (114 aa). At Ser104 the chain carries Phosphoserine. 2 NR C4-type zinc fingers span residues 115–135 and 151–175; these read CFVC…CEGC and CHRD…LQKC. Residues 115–180 constitute a DNA-binding region (nuclear receptor); sequence CFVCQDKSSG…RLQKCFEVGM (66 aa). Residues 181–209 are hinge; sequence SKESVRNDRNKKKKEPSKQECTESYEMTA. Residues 210–444 enclose the NR LBD domain; it reads ELDDLTEKIR…PLIQEMLENS (235 aa). Positions 443–482 are disordered; sequence NSEGHEPLTPSSSGNIAEHSPSVSPSSVENSGVSQSPLLQ. The segment covering 462–482 has biased composition (low complexity); it reads SPSVSPSSVENSGVSQSPLLQ.

It belongs to the nuclear hormone receptor family. NR1 subfamily. Homodimer. Heterodimer; with a RXR molecule. Binds DNA preferentially as a RAR/RXR heterodimer. Heterodimerizes (via NR LBD) with RXRA. Interacts weakly with NCOR2.

The protein resides in the nucleus. It is found in the cytoplasm. In terms of biological role, receptor for retinoic acid. Retinoic acid receptors bind as heterodimers to their target response elements in response to their ligands, all-trans or 9-cis retinoic acid, and regulate gene expression in various biological processes. The RAR/RXR heterodimers bind to the retinoic acid response elements (RARE) composed of tandem 5'-AGGTCA-3' sites known as DR1-DR5. In the absence of ligand, acts mainly as an activator of gene expression due to weak binding to corepressors. The RXRA/RARB heterodimer can act as a repressor on the DR1 element and as an activator on the DR5 element. In concert with RARG, required for skeletal growth, matrix homeostasis and growth plate function. The protein is Retinoic acid receptor beta (Rarb) of Mus musculus (Mouse).